We begin with the raw amino-acid sequence, 272 residues long: Phosphate import ATP-binding protein PstB (272 aa).

The ABC transporter domain occupies 26–267 (LDIKNLDLYY…PSEKQTEDYI (242 aa)). 58–65 (GPSGCGKS) lines the ATP pocket.

Belongs to the ABC transporter superfamily. Phosphate importer (TC 3.A.1.7) family. As to quaternary structure, the complex is composed of two ATP-binding proteins (PstB), two transmembrane proteins (PstC and PstA) and a solute-binding protein (PstS).

The protein resides in the cell inner membrane. It catalyses the reaction phosphate(out) + ATP + H2O = ADP + 2 phosphate(in) + H(+). Functionally, part of the ABC transporter complex PstSACB involved in phosphate import. Responsible for energy coupling to the transport system. In Idiomarina loihiensis (strain ATCC BAA-735 / DSM 15497 / L2-TR), this protein is Phosphate import ATP-binding protein PstB.